The following is a 2215-amino-acid chain: Unconventional myosin-VIIa (2215 aa).

The region spanning 65–741 is the Myosin motor domain; sequence HGVEDMIRLG…HDMLLEVERD (677 aa). 158–165 is a binding site for ATP; it reads GESGAGKT. Positions 632-639 are actin-binding; that stretch reads FVRCIKPN. IQ domains follow at residues 745–765, 768–788, 791–811, 814–834, and 837–857; these read TDRV…SNFL, KNAA…KNYG, RLGF…QQYR, RQRI…KAFR, and LWAV…RLHQ. Residues 858 to 935 are SAH; that stretch reads RLRAEYLWRL…LEQMERARHE (78 aa). A MyTH4 1 domain is found at 1017–1253; sequence YTRRPLKQPL…PSWLELQATK (237 aa). An FERM 1 domain is found at 1258 to 1602; the sequence is IMLPVTFMDG…LVVTFLEGLR (345 aa). Phosphoserine is present on Ser-1569. Thr-1571 carries the phosphothreonine modification. The 70-residue stretch at 1603 to 1672 folds into the SH3 domain; the sequence is KRSKYVVALQ…PTDSVYVMPT (70 aa). The 150-residue stretch at 1747-1896 folds into the MyTH4 2 domain; the sequence is HTREPLKQAL…PHLVEVEAIQ (150 aa). Positions 1902-2205 constitute an FERM 2 domain; that stretch reads IFHKVYFPDD…SYISQMLTAM (304 aa).

This sequence belongs to the TRAFAC class myosin-kinesin ATPase superfamily. Myosin family. In terms of assembly, might homodimerize in a two headed molecule through the formation of a coiled-coil rod. Identified in a complex with USH1C and USH1G. Interacts with MYRIP. Interacts with RPE65. Interacts with CIB2. May interact with CALM. Interacts with WHRN. Interacts with PLEKHB1 (via PH domain). Interacts with PCDH15. Interacts with TWF2. Interacts with USH1G. Interacts with MYH9. Interacts (via MyTH4-FERM domains) with cytoplasmic regions of ADGRV1 and USH2A. Interacts with PDZD7 (via MyTH4-FERM domains). Interacts with CALML4. As to expression, expressed in the pigment epithelium and the photoreceptor cells of the retina. Also found in kidney, liver, testis, cochlea, lymphocytes. Not expressed in brain.

The protein resides in the cytoplasm. The protein localises to the cell cortex. It is found in the cytoskeleton. It localises to the synapse. ATP hydrolysis is inhibited by Mg(2+), already at a concentration of 0.4 mM. Its function is as follows. Myosins are actin-based motor molecules with ATPase activity. Unconventional myosins serve in intracellular movements. Their highly divergent tails bind to membranous compartments, which are then moved relative to actin filaments. In the retina, plays an important role in the renewal of the outer photoreceptor disks. Plays an important role in the distribution and migration of retinal pigment epithelial (RPE) melanosomes and phagosomes, and in the regulation of opsin transport in retinal photoreceptors. In the inner ear, plays an important role in differentiation, morphogenesis and organization of cochlear hair cell bundles. Involved in hair-cell vesicle trafficking of aminoglycosides, which are known to induce ototoxicity. Motor protein that is a part of the functional network formed by USH1C, USH1G, CDH23 and MYO7A that mediates mechanotransduction in cochlear hair cells. Required for normal hearing. The polypeptide is Unconventional myosin-VIIa (Homo sapiens (Human)).